A 339-amino-acid chain; its full sequence is Uroporphyrinogen decarboxylase (339 aa).

Substrate is bound by residues 21–25 (RQAGR), Asp71, Tyr147, Ser202, and His315.

Belongs to the uroporphyrinogen decarboxylase family. As to quaternary structure, homodimer.

The protein localises to the cytoplasm. The catalysed reaction is uroporphyrinogen III + 4 H(+) = coproporphyrinogen III + 4 CO2. Its pathway is porphyrin-containing compound metabolism; protoporphyrin-IX biosynthesis; coproporphyrinogen-III from 5-aminolevulinate: step 4/4. In terms of biological role, catalyzes the decarboxylation of four acetate groups of uroporphyrinogen-III to yield coproporphyrinogen-III. This chain is Uroporphyrinogen decarboxylase, found in Helicobacter pylori (strain Shi470).